Here is a 20-residue protein sequence, read N- to C-terminus: Phenol-soluble modulin alpha 4 peptide (20 aa).

Belongs to the phenol-soluble modulin alpha peptides family.

Its function is as follows. Peptide which can recruit, activate and subsequently lyse neutrophils, thus eliminating the main cellular defense against infection. This chain is Phenol-soluble modulin alpha 4 peptide (psmA4), found in Staphylococcus aureus (strain bovine RF122 / ET3-1).